The chain runs to 248 residues: Probable transcriptional regulator LumQ (248 aa).

Residues 148 to 246 (VLIDNYIEQH…GMSPTRYQFF (99 aa)) form the HTH araC/xylS-type domain. 2 consecutive DNA-binding regions (H-T-H motif) follow at residues 165 to 186 (AELSSVAFLAQSQFYALFKSQM) and 213 to 236 (LSQVAQLCGFSSQSSFSQAFRRLY).

In terms of biological role, probable transcriptional regulator. Its target gene(s) is not yet known. The polypeptide is Probable transcriptional regulator LumQ (lumQ) (Photobacterium leiognathi).